The chain runs to 229 residues: MSDNSKENLRQIKSYVQRAGRVTKKQQQALDDYASKYMIEYDQNKSLDFSEIFKNSNDVVLEIGFGMGGSLVQMALENPTKNYLGIEVHKAGVGNILYEIEHQNISNLLVMSHDAVEILENMISDNSLSGMQIYFPDPWHKKKHNKRRLVNQSNVDLFAKKLKVGGVFHYASDWLPYAEEVLELLENDNKYKNLYDGFAPRPEWRPLTKFEKRGQNLDHPISDILFEKI.

4 residues coordinate S-adenosyl-L-methionine: Glu-62, Glu-87, Asp-114, and Asp-137. Residue Asp-137 is part of the active site. Substrate is bound at residue Lys-141. The tract at residues 143–148 is interaction with RNA; the sequence is KHNKRR. Residues Asp-173 and 208–211 each bind substrate; that span reads TKFE.

It belongs to the class I-like SAM-binding methyltransferase superfamily. TrmB family.

The enzyme catalyses guanosine(46) in tRNA + S-adenosyl-L-methionine = N(7)-methylguanosine(46) in tRNA + S-adenosyl-L-homocysteine. The protein operates within tRNA modification; N(7)-methylguanine-tRNA biosynthesis. Functionally, catalyzes the formation of N(7)-methylguanine at position 46 (m7G46) in tRNA. This chain is tRNA (guanine-N(7)-)-methyltransferase, found in Francisella philomiragia subsp. philomiragia (strain ATCC 25017 / CCUG 19701 / FSC 153 / O#319-036).